Here is a 531-residue protein sequence, read N- to C-terminus: Protein SHORT-ROOT (531 aa).

Over residues glutamine 14–threonine 39 the composition is skewed to low complexity. Disordered regions lie at residues glutamine 14–alanine 40 and serine 65–threonine 103. Residues threonine 81 to histidine 93 show a composition bias toward polar residues. Residues proline 94–threonine 103 are compositionally biased toward low complexity. Residues phenylalanine 134–arginine 529 enclose the GRAS domain. A leucine repeat I (LRI) region spans residues lysine 141–methionine 206. A VHIID region spans residues valine 225–threonine 290. Positions isoleucine 256–aspartate 260 match the VHIID motif. Residues glutamate 310 to asparagine 343 form a leucine repeat II (LRII) region. Residues leucine 353–aspartate 449 are PFYRE. The tract at residues alanine 452–arginine 529 is SAW.

It belongs to the GRAS family. In terms of assembly, interacts with SCR, SCL23, JKD and MGP. Interacts with SIEL. Association to endosomes and intercellular movement of SHR rely on the interaction with SIEL. As to expression, expressed in the stele and the quiescent center. Not detected in the ground tissue cell lineage. The SHR protein moves from the stele to a single layer of adjacent cells, where it enters the nucleus.

Its subcellular location is the cytoplasm. The protein localises to the nucleus. The protein resides in the early endosome. It is found in the late endosome. It localises to the recycling endosome. Functionally, transcription factor required for quiescent center cells specification and maintenance of surrounding stem cells, and for the asymmetric cell division involved in radial pattern formation in roots. Essential for both cell division and cell specification. Regulates the radial organization of the shoot axial organs and is required for normal shoot gravitropism. Directly controls the transcription of SCR, and when associated with SCR, of MGP, RLK, TRI, NUC and SCL3. This chain is Protein SHORT-ROOT, found in Arabidopsis thaliana (Mouse-ear cress).